A 207-amino-acid polypeptide reads, in one-letter code: Small ribosomal subunit protein uS10m (207 aa).

The N-terminal 14 residues, 1–14 (MNMFRQAVRSFVRY), are a transit peptide targeting the mitochondrion.

The protein belongs to the universal ribosomal protein uS10 family. Part of the mitochondrial small ribosomal subunit.

Its subcellular location is the mitochondrion. Involved in mitochondrial genome encoded proteins translation. Involved in the binding of tRNA to the ribosomes. The sequence is that of Small ribosomal subunit protein uS10m (RSM10) from Kluyveromyces lactis (strain ATCC 8585 / CBS 2359 / DSM 70799 / NBRC 1267 / NRRL Y-1140 / WM37) (Yeast).